The following is a 357-amino-acid chain: Chorismate synthase (357 aa).

Residue arginine 46 participates in NADP(+) binding. FMN-binding positions include 123–125, 235–236, glycine 275, 290–294, and arginine 316; these read RSS, NA, and KPTPS.

It belongs to the chorismate synthase family. Homotetramer. It depends on FMNH2 as a cofactor.

The catalysed reaction is 5-O-(1-carboxyvinyl)-3-phosphoshikimate = chorismate + phosphate. It functions in the pathway metabolic intermediate biosynthesis; chorismate biosynthesis; chorismate from D-erythrose 4-phosphate and phosphoenolpyruvate: step 7/7. In terms of biological role, catalyzes the anti-1,4-elimination of the C-3 phosphate and the C-6 proR hydrogen from 5-enolpyruvylshikimate-3-phosphate (EPSP) to yield chorismate, which is the branch point compound that serves as the starting substrate for the three terminal pathways of aromatic amino acid biosynthesis. This reaction introduces a second double bond into the aromatic ring system. The chain is Chorismate synthase from Nitratiruptor sp. (strain SB155-2).